The following is a 414-amino-acid chain: Histidine--tRNA ligase (414 aa).

It belongs to the class-II aminoacyl-tRNA synthetase family. Homodimer.

The protein localises to the cytoplasm. It catalyses the reaction tRNA(His) + L-histidine + ATP = L-histidyl-tRNA(His) + AMP + diphosphate + H(+). The protein is Histidine--tRNA ligase of Mycoplasma mycoides subsp. mycoides SC (strain CCUG 32753 / NCTC 10114 / PG1).